The chain runs to 542 residues: CTP synthase (542 aa).

The amidoligase domain stretch occupies residues 1 to 265 (MTRFIFITGG…DTQVLKFFGM (265 aa)). S13 lines the CTP pocket. S13 contributes to the UTP binding site. 14–19 (SLGKGL) serves as a coordination point for ATP. Y54 is an L-glutamine binding site. D71 lines the ATP pocket. Mg(2+) contacts are provided by D71 and E139. Residues 146-148 (DIE), 186-191 (KTKPTQ), and K222 each bind CTP. Residues 186-191 (KTKPTQ) and K222 contribute to the UTP site. The Glutamine amidotransferase type-1 domain maps to 291–541 (TIAVVGKYTS…IRAAIEQSRL (251 aa)). Residue G353 participates in L-glutamine binding. The Nucleophile; for glutamine hydrolysis role is filled by C380. L-glutamine is bound by residues 381–384 (FGMQ), E404, and R469. Residues H514 and E516 contribute to the active site.

This sequence belongs to the CTP synthase family. As to quaternary structure, homotetramer.

The catalysed reaction is UTP + L-glutamine + ATP + H2O = CTP + L-glutamate + ADP + phosphate + 2 H(+). It catalyses the reaction L-glutamine + H2O = L-glutamate + NH4(+). It carries out the reaction UTP + NH4(+) + ATP = CTP + ADP + phosphate + 2 H(+). It participates in pyrimidine metabolism; CTP biosynthesis via de novo pathway; CTP from UDP: step 2/2. Its activity is regulated as follows. Allosterically activated by GTP, when glutamine is the substrate; GTP has no effect on the reaction when ammonia is the substrate. The allosteric effector GTP functions by stabilizing the protein conformation that binds the tetrahedral intermediate(s) formed during glutamine hydrolysis. Inhibited by the product CTP, via allosteric rather than competitive inhibition. Its function is as follows. Catalyzes the ATP-dependent amination of UTP to CTP with either L-glutamine or ammonia as the source of nitrogen. Regulates intracellular CTP levels through interactions with the four ribonucleotide triphosphates. The polypeptide is CTP synthase (Rhodospirillum centenum (strain ATCC 51521 / SW)).